A 387-amino-acid chain; its full sequence is WD repeat-containing protein 89 (387 aa).

6 WD repeats span residues 21–65, 68–107, 112–156, 168–208, 214–254, and 319–358; these read KEPT…VLRE, GYPG…EKPV, GYPS…QNLS, THSD…EEDA, NSIS…TDEP, and GHAA…KTFT.

This Homo sapiens (Human) protein is WD repeat-containing protein 89 (WDR89).